The chain runs to 543 residues: CTP synthase (543 aa).

Residues 1–265 (MARYIFITGG…DDEVLAAFGI (265 aa)) form an amidoligase domain region. A CTP-binding site is contributed by Ser-13. UTP is bound at residue Ser-13. 14-19 (SLGKGL) is a binding site for ATP. Position 54 (Tyr-54) interacts with L-glutamine. Asp-71 lines the ATP pocket. Residues Asp-71 and Glu-139 each coordinate Mg(2+). CTP is bound by residues 146-148 (DIE), 186-191 (KTKPTQ), and Lys-222. Residues 186-191 (KTKPTQ) and Lys-222 contribute to the UTP site. Position 238 to 240 (238 to 240 (RDA)) interacts with ATP. In terms of domain architecture, Glutamine amidotransferase type-1 spans 291 to 542 (TIAIVGKYTG…IQAAVVQSRL (252 aa)). Gly-353 serves as a coordination point for L-glutamine. Cys-380 functions as the Nucleophile; for glutamine hydrolysis in the catalytic mechanism. L-glutamine contacts are provided by residues 381–384 (FGMQ), Glu-404, and Arg-470. Catalysis depends on residues His-515 and Glu-517.

This sequence belongs to the CTP synthase family. In terms of assembly, homotetramer.

It catalyses the reaction UTP + L-glutamine + ATP + H2O = CTP + L-glutamate + ADP + phosphate + 2 H(+). It carries out the reaction L-glutamine + H2O = L-glutamate + NH4(+). The catalysed reaction is UTP + NH4(+) + ATP = CTP + ADP + phosphate + 2 H(+). It functions in the pathway pyrimidine metabolism; CTP biosynthesis via de novo pathway; CTP from UDP: step 2/2. Its activity is regulated as follows. Allosterically activated by GTP, when glutamine is the substrate; GTP has no effect on the reaction when ammonia is the substrate. The allosteric effector GTP functions by stabilizing the protein conformation that binds the tetrahedral intermediate(s) formed during glutamine hydrolysis. Inhibited by the product CTP, via allosteric rather than competitive inhibition. Its function is as follows. Catalyzes the ATP-dependent amination of UTP to CTP with either L-glutamine or ammonia as the source of nitrogen. Regulates intracellular CTP levels through interactions with the four ribonucleotide triphosphates. The chain is CTP synthase from Nitrobacter winogradskyi (strain ATCC 25391 / DSM 10237 / CIP 104748 / NCIMB 11846 / Nb-255).